The sequence spans 451 residues: 23S rRNA (uracil(1939)-C(5))-methyltransferase RlmD (451 aa).

The TRAM domain maps to 20–78 (QIPAGKKQRLTIERLSDDGRGIAFLEGKTWFVAGSLAGEEVEARVLNARGKVVEARTER). C91, C97, C100, and C179 together coordinate [4Fe-4S] cluster. 6 residues coordinate S-adenosyl-L-methionine: Q283, F312, N317, E333, D360, and D381. C407 (nucleophile) is an active-site residue.

This sequence belongs to the class I-like SAM-binding methyltransferase superfamily. RNA M5U methyltransferase family. RlmD subfamily.

It carries out the reaction uridine(1939) in 23S rRNA + S-adenosyl-L-methionine = 5-methyluridine(1939) in 23S rRNA + S-adenosyl-L-homocysteine + H(+). In terms of biological role, catalyzes the formation of 5-methyl-uridine at position 1939 (m5U1939) in 23S rRNA. This Pseudomonas savastanoi pv. phaseolicola (strain 1448A / Race 6) (Pseudomonas syringae pv. phaseolicola (strain 1448A / Race 6)) protein is 23S rRNA (uracil(1939)-C(5))-methyltransferase RlmD.